The following is a 634-amino-acid chain: uncharacterized protein (634 aa).

Residues Met-1–Ala-40 form the signal peptide. Topologically, residues Arg-41–Gly-589 are extracellular. Asn-363 is a glycosylation site (N-linked (GlcNAc...) asparagine). The chain crosses the membrane as a helical span at residues Leu-590–Phe-610. Residues Lys-611 to Val-634 are Cytoplasmic-facing.

It is found in the membrane. This is an uncharacterized protein from Bos taurus (Bovine).